The sequence spans 276 residues: Rhamnulose-1-phosphate aldolase (276 aa).

Residue Glu117 is part of the active site. The Zn(2+) site is built by His141, His143, and His212.

It belongs to the aldolase class II family. RhaD subfamily. In terms of assembly, homotetramer. Zn(2+) is required as a cofactor.

It is found in the cytoplasm. The enzyme catalyses L-rhamnulose 1-phosphate = (S)-lactaldehyde + dihydroxyacetone phosphate. Its pathway is carbohydrate degradation; L-rhamnose degradation; glycerone phosphate from L-rhamnose: step 3/3. Catalyzes the reversible cleavage of L-rhamnulose-1-phosphate to dihydroxyacetone phosphate (DHAP) and L-lactaldehyde. The sequence is that of Rhamnulose-1-phosphate aldolase from Klebsiella pneumoniae subsp. pneumoniae (strain ATCC 700721 / MGH 78578).